We begin with the raw amino-acid sequence, 84 residues long: Toxin To7 (84 aa).

Residues 1–20 (MSIFPIVLALLLIGLEETEA) form the signal peptide. Positions 21–83 (LDGYPLSKIN…KMYPGSSPCY (63 aa)) constitute an LCN-type CS-alpha/beta domain. Intrachain disulfides connect C32-C82, C36-C59, C42-C64, and C46-C66.

Expressed by the venom gland.

It localises to the secreted. In terms of biological role, inhibits voltage-gated sodium channels (Nav). The chain is Toxin To7 from Tityus obscurus (Amazonian scorpion).